The chain runs to 124 residues: Predicted GPI-anchored protein 11 (124 aa).

The signal sequence occupies residues 1–18 (MKFQFVTALALASTMAVA). Residues 38–59 (REGGSTGAELQDNNQPTAGLFG) are disordered. The GPI-anchor amidated serine moiety is linked to residue Ser107. A propeptide spans 108 to 124 (GAAGGVGNLFSGILGGL) (removed in mature form).

Its subcellular location is the cell membrane. This Candida albicans (strain SC5314 / ATCC MYA-2876) (Yeast) protein is Predicted GPI-anchored protein 11 (PGA11).